The primary structure comprises 1437 residues: Protein SUPPRESSOR OF npr1-1, CONSTITUTIVE 1 (1437 aa).

Methionine 1 is subject to N-acetylmethionine. Residues 19–182 (RRYDVFPSFR…ELAEDVLRKT (164 aa)) enclose the TIR domain. 28–33 (RGEDVR) serves as a coordination point for NAD(+). The active site involves glutamate 93. LRR repeat units follow at residues 554–576 (MRNLQYLEIGYYGDLPQSLVYLP), 577–598 (LKLRLLDWDDCPLKSLPSTFKA), 600–621 (YLVNLIMKYSKLEKLWEGTLPL), 622–645 (GSLKEMNLRYSNNLKEIPDLSLAI), 647–668 (LEELDLVGCKSLVTLPSSIQNA), 670–691 (KLIYLDMSDCKKLESFPTDLNL), 692–715 (ESLEYLNLTGCPNLRNFPAIKMGC), 781–805 (LGSLEGMDLSESENLTEIPDLSKAT), 807–828 (LESLILNNCKSLVTLPSTIGNL), 829–851 (HRLVRLEMKECTGLEVLPTDVNL), 852–875 (SSLETLDLSGCSSLRSFPLISTNI), 877–895 (WLYLENTAIEEIPSTIGNL), 897–918 (RLVRLEMKKCTGLEVLPTDVNL), 919–939 (SSLETLDLSGCSSLRSFPLIS), 940–962 (ESIKWLYLENTAIEEIPDLSKAT), 964–985 (LKNLKLNNCKSLVTLPTTIGNL), 1009–1029 (SSLMILDLSGCSSLRTFPLIS), 1030–1052 (TNIVWLYLENTAIEEIPSTIGNL), 1054–1075 (RLVKLEMKECTGLEVLPTDVNL), 1076–1096 (SSLMILDLSGCSSLRTFPLIS), 1097–1121 (TRIECLYLQNTAIEEVPCCIEDFTR), 1123–1143 (TVLMMYCCQRLKTISPNIFRL), and 1161–1185 (LSDATVVATMEDHVSCVPLSENIEY).

This sequence belongs to the disease resistance TIR-NB-LRR family. In terms of assembly, homodimer. Interacts (via TIR domain) with TPR1. Interacts with EDS1. Interacts with SRFR1. Interacts with HSP90-3. Binds to MORC1/CRT1. Interacts with TRAF1B. Post-translationally, met-1 is specifically acetylated by N-terminal acetyltransferase complex A (NatA). The NatA-mediated acetylation serves as a degradation signal. In terms of processing, met-1 is specifically acetylated by N-terminal acetyltransferase complex B (NatB). The NatB-mediated acetylation stabilizes SNC1. Expressed in guard cells and epidermal cells, but not detected in mesophyll cells.

The protein localises to the cytoplasm. It localises to the microsome. Its subcellular location is the nucleus. The enzyme catalyses NAD(+) + H2O = ADP-D-ribose + nicotinamide + H(+). Disease resistance protein of the TIR-NB-LRR-type. Part of the RPP5 locus that contains a cluster of several paralogous disease resistance (R) genes. Resistance proteins guard the plant against pathogens that contain an appropriate avirulence protein via an indirect interaction with this avirulence protein. That triggers a defense system including the hypersensitive response, which restricts the pathogen growth. Probably acts as a NAD(+) hydrolase (NADase): in response to activation, catalyzes cleavage of NAD(+) into ADP-D-ribose (ADPR) and nicotinamide; NAD(+) cleavage triggering a defense system that promotes cell death. Expression regulated by MOS1 at chromatin level. Nuclear localization of SNC1 is essential for its activity. ABA deficiency can rescue high-temperature inhibition of SNC1-mediated defense responses. The protein is Protein SUPPRESSOR OF npr1-1, CONSTITUTIVE 1 of Arabidopsis thaliana (Mouse-ear cress).